A 342-amino-acid polypeptide reads, in one-letter code: GTPase Obg (342 aa).

Positions M1–L159 constitute an Obg domain. The 171-residue stretch at A160–D330 folds into the OBG-type G domain. GTP is bound by residues G166–S173, F191–I195, D213–G216, N280–D283, and S311–V313. Residues S173 and T193 each coordinate Mg(2+).

It belongs to the TRAFAC class OBG-HflX-like GTPase superfamily. OBG GTPase family. Monomer. It depends on Mg(2+) as a cofactor.

The protein localises to the cytoplasm. An essential GTPase which binds GTP, GDP and possibly (p)ppGpp with moderate affinity, with high nucleotide exchange rates and a fairly low GTP hydrolysis rate. Plays a role in control of the cell cycle, stress response, ribosome biogenesis and in those bacteria that undergo differentiation, in morphogenesis control. The polypeptide is GTPase Obg (Nostoc punctiforme (strain ATCC 29133 / PCC 73102)).